We begin with the raw amino-acid sequence, 323 residues long: Beta-ketoacyl-[acyl-carrier-protein] synthase III (323 aa).

Catalysis depends on residues C114 and H250. The ACP-binding stretch occupies residues 251-255; that stretch reads QANLR. N280 is an active-site residue.

The protein belongs to the thiolase-like superfamily. FabH family. In terms of assembly, homodimer.

It localises to the cytoplasm. The catalysed reaction is malonyl-[ACP] + acetyl-CoA + H(+) = 3-oxobutanoyl-[ACP] + CO2 + CoA. The protein operates within lipid metabolism; fatty acid biosynthesis. Catalyzes the condensation reaction of fatty acid synthesis by the addition to an acyl acceptor of two carbons from malonyl-ACP. Catalyzes the first condensation reaction which initiates fatty acid synthesis and may therefore play a role in governing the total rate of fatty acid production. Possesses both acetoacetyl-ACP synthase and acetyl transacylase activities. Its substrate specificity determines the biosynthesis of branched-chain and/or straight-chain of fatty acids. In Cereibacter sphaeroides (strain ATCC 17023 / DSM 158 / JCM 6121 / CCUG 31486 / LMG 2827 / NBRC 12203 / NCIMB 8253 / ATH 2.4.1.) (Rhodobacter sphaeroides), this protein is Beta-ketoacyl-[acyl-carrier-protein] synthase III.